We begin with the raw amino-acid sequence, 453 residues long: AP-4 complex subunit mu-1 (453 aa).

Positions 184 to 452 (KNEVFLDVVE…LSHSDAYVIR (269 aa)) constitute an MHD domain.

Belongs to the adaptor complexes medium subunit family. In terms of assembly, adaptor protein complex 4 (AP-4) is a heterotetramer composed of two large adaptins (epsilon-type subunit AP4E1 and beta-type subunit AP4B1), a medium adaptin (mu-type subunit AP4M1) and a small adaptin (sigma-type AP4S1). Interacts with tyrosine-based sorting signals on the cytoplasmic tail of cargo proteins such as APP, ATG9A, LAMP2 and NAGPA. Interacts with the C-terminal domain of GRID2. Interacts with GRIA1 and GRIA2; the interaction is indirect via CACNG3. Interacts with CACNG3; CACNG3 associates GRIA1 and GRIA2 with the adaptor protein complex 4 (AP-4) to target them to the somatodendritic compartment of neurons. Interacts with HOOK1 and HOOK2; the interactions are direct, mediate the interaction between FTS-Hook-FHIP (FHF) complex and AP-4 and the perinuclear distribution of AP-4. As to expression, ubiquitous. Highly expressed in testis and lowly expressed in brain and lung.

It localises to the golgi apparatus. The protein resides in the trans-Golgi network membrane. Its subcellular location is the early endosome. Functionally, component of the adaptor protein complex 4 (AP-4). Adaptor protein complexes are vesicle coat components involved both in vesicle formation and cargo selection. They control the vesicular transport of proteins in different trafficking pathways. AP-4 forms a non clathrin-associated coat on vesicles departing the trans-Golgi network (TGN) and may be involved in the targeting of proteins from the trans-Golgi network (TGN) to the endosomal-lysosomal system. It is also involved in protein sorting to the basolateral membrane in epithelial cells and the proper asymmetric localization of somatodendritic proteins in neurons. Within AP-4, the mu-type subunit AP4M1 is directly involved in the recognition and binding of tyrosine-based sorting signals found in the cytoplasmic part of cargos. The adaptor protein complex 4 (AP-4) may also recognize other types of sorting signal. This chain is AP-4 complex subunit mu-1, found in Homo sapiens (Human).